Consider the following 348-residue polypeptide: MSGWSHRHILDLASFSLEDYSSVLELAHRFRSMPVTGARKLPALQGRLVATLFFEPSTRTRSSFELAARRLSADVQSFTPASSSLSKGETLLDTARTYVAMGADVLVVRHGSTSVPEQLACALDRSGERTAVLNGGDGLHSHPSQGLLDLYTLAHHFDPDHPLPEAIQGRRIVIVGDVLHSRVARSNLWALTACGADVVLCGPPSLVPQDFVAFVEAPPPGQAHDPVLHRGCVEVVRTLEEALPGADAVMTLRLQKERMHQHLLTDLNRFHRDYGLTHERLKLCGKPVPLLHPGPVNRGVELGGSLLDDHSISLVEEQVRNGIPIRMALLYLMAAFESSPDPSLEAIG.

Residues Arg-59 and Thr-60 each contribute to the carbamoyl phosphate site. Lys-87 contacts L-aspartate. Residues Arg-109, His-142, and Gln-145 each coordinate carbamoyl phosphate. Arg-182 and Arg-253 together coordinate L-aspartate. The carbamoyl phosphate site is built by Gly-294 and Pro-295.

Belongs to the aspartate/ornithine carbamoyltransferase superfamily. ATCase family. In terms of assembly, heterododecamer (2C3:3R2) of six catalytic PyrB chains organized as two trimers (C3), and six regulatory PyrI chains organized as three dimers (R2).

It carries out the reaction carbamoyl phosphate + L-aspartate = N-carbamoyl-L-aspartate + phosphate + H(+). Its pathway is pyrimidine metabolism; UMP biosynthesis via de novo pathway; (S)-dihydroorotate from bicarbonate: step 2/3. Its function is as follows. Catalyzes the condensation of carbamoyl phosphate and aspartate to form carbamoyl aspartate and inorganic phosphate, the committed step in the de novo pyrimidine nucleotide biosynthesis pathway. This Prochlorococcus marinus (strain MIT 9313) protein is Aspartate carbamoyltransferase catalytic subunit.